The following is a 224-amino-acid chain: Ribonuclease HII (224 aa).

The RNase H type-2 domain maps to 1–210 (MKIGGIDEAG…VRKIEESIKA (210 aa)). 3 residues coordinate a divalent metal cation: Asp-7, Glu-8, and Asp-105.

This sequence belongs to the RNase HII family. It depends on Mn(2+) as a cofactor. The cofactor is Mg(2+).

It localises to the cytoplasm. It catalyses the reaction Endonucleolytic cleavage to 5'-phosphomonoester.. Functionally, endonuclease that specifically degrades the RNA of RNA-DNA hybrids. The polypeptide is Ribonuclease HII (Pyrococcus furiosus (strain ATCC 43587 / DSM 3638 / JCM 8422 / Vc1)).